The following is a 1397-amino-acid chain: ABC transporter G family member 41 (1397 aa).

Residues 138–411 (SLSKFVCSKK…FEGCGFKCPE (274 aa)) form the ABC transporter 1 domain. An ATP-binding site is contributed by 171–178 (GPPGCGKT). In terms of domain architecture, ABC transmembrane type-2 1 spans 489–701 (EMLKACSRRE…AEIGLTANEF (213 aa)). 6 helical membrane passes run 507–527 (FIYL…MTVF), 549–570 (ALFR…RLGV), 594–614 (IPLS…VIGY), 625–645 (FIIL…IASI), 651–671 (ACSI…GFVI), and 735–755 (TAFG…TLAL). Residues 805-1050 (VTFQNVQYYI…VIKYFESIPG (246 aa)) enclose the ABC transporter 2 domain. 842-849 (GVSGAGKT) contacts ATP. Residues 1122-1336 (GQLKACLWKQ…VLEGLLSSQY (215 aa)) enclose the ABC transmembrane type-2 2 domain. The next 7 membrane-spanning stretches (helical) occupy residues 1141–1161 (HNLT…LLFW), 1173–1193 (LFSI…NNCA), 1229–1249 (VPYS…MIGY), 1260–1280 (LYSI…MVAL), 1286–1306 (MALT…GFVM), 1314–1334 (WWIW…LLSS), and 1369–1389 (VVAF…AFFM).

This sequence belongs to the ABC transporter superfamily. ABCG family. PDR (TC 3.A.1.205) subfamily. As to expression, confined to roots.

Its subcellular location is the membrane. Its function is as follows. May be a general defense protein. This Arabidopsis thaliana (Mouse-ear cress) protein is ABC transporter G family member 41 (ABCG41).